We begin with the raw amino-acid sequence, 184 residues long: MSEVIVEMSGRMAKSVEAFKNDLSRVRTGRASISILDDITVVAYGSTMPLNQVATLTIPESRMIALQPWDPQMIPPIEKAILKSGLGLNPVNDGKVVRLNIPQLTEDRRKDLVKQVKKIAEEFRVAIRNVRRDAIDTLKLQKKDKEISEDDLFKLQDDAQKETDIYIKQLDEVSASKEKEVMEV.

It belongs to the RRF family.

Its subcellular location is the cytoplasm. Responsible for the release of ribosomes from messenger RNA at the termination of protein biosynthesis. May increase the efficiency of translation by recycling ribosomes from one round of translation to another. The polypeptide is Ribosome-recycling factor (Desulfotalea psychrophila (strain LSv54 / DSM 12343)).